The sequence spans 1122 residues: MQEATEPPPPKRKNKGTVVAPKGHGTLQAIDISTNGPVEIKYHLNLPHALEKIMQVNLLTLPTNLTPQRLRTLDSSGLRALVLELRPCRAEVWTCLPRGLVSMTTIETEDGHADADNIVEREVQAPSLNFPLKFLVKGSQVQLIHEVHPVNRCEYCGRLYKHKHECSARRREFYFHHINSHSSNWWQEIQFFPIGSHPRTERLFLTYDVETYTWMGSFGKQLIPFMLVMKLSGDQRLVNIAYDIAMKLKWDRWRQDPQTFYCITPEKMAVGQHFRQYRDQLQTALAVDLWSSFLKANPHMHEWALEHYALTDPTDLTFEELKKLPHVRGTPRFLELYIVGHNINGFDEIVLAAQVINNRAEVPQPFKITRNFMPRAGEILFNDVTFALPNPAYKKRADFQLWEQGACDDIDFKYQFLKVMVRDTFALTHTSLRNAAQAYSLPVEKGCCPYKAVNQFYMLGSYRAEKDGFPLEEYWKDHEEYLLNRELWEKKSQPRYDIIQETLNYCALDVLVTAELVAKLQESYAHFIRDSVGLPHVHFNIFQRPTISSNSHAIFRQIVYRAEKPNRTNLGPGLLAPSHELYDYVRASIRGGRCYPTYIGILEEPLYVYDICGMYASALTHPMPWGTPLNPYERALAVREWQMTLDDPATISYFDKDLLPGIFTIDADPPDEFMLDPLPPFCSRKGGRLCWTNEPLRGEVATTVDLITLHNRGWRVRIVPDELTTIFPEWKCVAREYVQLNIAAKERADKEKNQTMRSIAKLLSNALYGSFATKLDNKKIVFSDQMDESLIKGISAGTVNIKSSSFLETDNLSAEVMPAFEREYLPQQLALLDSDPEDSEDEQRSAPFYTPPAGTPGHVAYTYKPITFLDVEEGDMCLHTVEKVDPLVDNDRYPSHVASFVLAWTRAFVSEWAGFLYEEDRGTPLEDRPIKSVYGDTDSLFVTQRGHELMETKGKKRIKKHGGKLVFDPDEPDLTWLVECETVCVSCGADAYSPESIFLAPKLYALKCIYCPACHKTSKGKLRAKGHAAEALNYELMVNCYLADMQGADRQRFSTSRMSLKRTLASAQPGAHPFTVTETTLTRTLRPWKDRTLAALDAHRLIPYSRSRPNPRNEEVCWIEMP.

The protein belongs to the DNA polymerase type-B family. In terms of assembly, heterodimer with the terminal protein; this heterodimer binds to bp 9 to 18 of the genome. Forms a complex with viral pTP, DBP and hosts NFIA and POU2F1/OCT1 for initiation of replication.

The protein localises to the host nucleus. It carries out the reaction DNA(n) + a 2'-deoxyribonucleoside 5'-triphosphate = DNA(n+1) + diphosphate. Its function is as follows. Eukaryotic-type DNA polymerase involved in viral genomic replication. DNA synthesis is protein primed, and acts in a strand displacement replication. Assembles in complex with viral pTP, DBP, host NFIA and host POU2F1/OCT1 on viral origin of replication. The polymerase covalently transfers dCMP onto pTP, thereby initiating complementary strand synthesis. This chain is DNA polymerase, found in Human adenovirus B serotype 7 (HAdV-7).